Consider the following 753-residue polypeptide: Oligopeptide transporter 5 (753 aa).

The next 15 helical transmembrane spans lie at 56 to 76 (TWFL…FFGY), 80 to 100 (PLTV…KLMA), 132 to 152 (ITIF…LTIV), 163 to 183 (AAAM…AGMF), 224 to 244 (FFLI…YLFP), 296 to 316 (FFAI…ILPI), 368 to 388 (YLSI…TATI), 432 to 452 (WWFV…CEGF), 461 to 481 (WGLL…GVIL), 506 to 528 (PLAN…YFVG), 544 to 564 (FIVQ…TTWW), 583 to 603 (PWTC…GIIG), 615 to 635 (PGMN…WFFA), 662 to 682 (AKAV…YYIF), and 695 to 715 (ILSA…YFAL).

The protein belongs to the oligopeptide OPT transporter (TC 2.A.67.1) family. As to expression, expressed predominantly in flowers, and at a very low level in leaves and roots.

Its subcellular location is the membrane. Functionally, involved in the translocation of tetra- and pentapeptides across the cellular membrane in an energy-dependent manner. The sequence is that of Oligopeptide transporter 5 (OPT5) from Arabidopsis thaliana (Mouse-ear cress).